The sequence spans 235 residues: Orotidine 5'-phosphate decarboxylase (235 aa).

Residues Asp12, Lys34, 61–70 (DMKLLDIDNT), Thr116, Arg177, Gln186, Gly206, and Arg207 contribute to the substrate site. The active-site Proton donor is the Lys63.

The protein belongs to the OMP decarboxylase family. Type 1 subfamily. As to quaternary structure, homodimer.

The enzyme catalyses orotidine 5'-phosphate + H(+) = UMP + CO2. Its pathway is pyrimidine metabolism; UMP biosynthesis via de novo pathway; UMP from orotate: step 2/2. In terms of biological role, catalyzes the decarboxylation of orotidine 5'-monophosphate (OMP) to uridine 5'-monophosphate (UMP). The chain is Orotidine 5'-phosphate decarboxylase from Rhizobium johnstonii (strain DSM 114642 / LMG 32736 / 3841) (Rhizobium leguminosarum bv. viciae).